The following is a 438-amino-acid chain: MTSEWSSPASPEGSNDSGGSEALDKPIDNDAEGVWSPDIEQSFQEALAIYPPCGRRKIILSDEGKMYGRNELIARYIKLRTGKTRTRKQVSSHIQVLARRKAREIQAKLKKTQVDKYDFSSEKDQTAKDKAMQSIATMSSAQIISATAFHSKMALPGLPRSAYPAVSGFWQGALPGQAGSSQDVKPFTQQPYALQPSLPLPGFDSPTGLPPSSSTPAWQGRRVASSKLWMLEFSAFLEQQQDQDTYNKHLFVHIGQSNPSYSDPYLEAVDIRQIYDKFPEKKGGLKELFERGPANAFFLVKFWADLNTNIEDESRSFYGVSSQYESPENMVITCSTKVCSFGKQVVEKVETEYAHYENGHYAYRIHRSPLCEYMINFIHKLKHLPEKYMMNSVLENFTILQVVTNRDTQETLLCIAYVFEVSASDHGAQHHIYRLVKD.

Polar residues predominate over residues Met-1–Gly-18. 2 disordered regions span residues Met-1–Ser-36 and Gln-195–Ala-217. The TEA DNA-binding region spans Asp-28–Glu-104. The span at Ser-205–Pro-216 shows a compositional bias: low complexity.

Enriched in cardiac and skeletal muscle.

It is found in the nucleus. Functionally, transcription factor which plays a key role in the Hippo signaling pathway, a pathway involved in organ size control and tumor suppression by restricting proliferation and promoting apoptosis. The core of this pathway is composed of a kinase cascade wherein MST1/MST2, in complex with its regulatory protein SAV1, phosphorylates and activates LATS1/2 in complex with its regulatory protein MOB1, which in turn phosphorylates and inactivates YAP1 oncoprotein and WWTR1/TAZ. Binds m-cat elements from muscle-specific promoters and differentially activate transcription. In terms of biological role, isoform B has probably a transactivation capacity that is lacking in the other isoforms. Isoform D may be defective in DNA binding. The protein is Transcriptional enhancer factor TEF-3 (TEAD4) of Gallus gallus (Chicken).